The chain runs to 338 residues: Ketol-acid reductoisomerase (NADP(+)) (338 aa).

The 181-residue stretch at 1-181 (MKVSYDKDCD…GGGRTGIIET (181 aa)) folds into the KARI N-terminal Rossmann domain. NADP(+)-binding positions include 24–27 (YGSQ), R47, S50, S52, and 82–85 (DEFQ). H107 is a catalytic residue. G133 is an NADP(+) binding site. A KARI C-terminal knotted domain is found at 182 to 327 (TFKDETETDL…EKLRAMMPWI (146 aa)). Mg(2+) contacts are provided by D190, E194, E226, and E230. S251 contacts substrate.

It belongs to the ketol-acid reductoisomerase family. Mg(2+) serves as cofactor.

The enzyme catalyses (2R)-2,3-dihydroxy-3-methylbutanoate + NADP(+) = (2S)-2-acetolactate + NADPH + H(+). It catalyses the reaction (2R,3R)-2,3-dihydroxy-3-methylpentanoate + NADP(+) = (S)-2-ethyl-2-hydroxy-3-oxobutanoate + NADPH + H(+). Its pathway is amino-acid biosynthesis; L-isoleucine biosynthesis; L-isoleucine from 2-oxobutanoate: step 2/4. The protein operates within amino-acid biosynthesis; L-valine biosynthesis; L-valine from pyruvate: step 2/4. Functionally, involved in the biosynthesis of branched-chain amino acids (BCAA). Catalyzes an alkyl-migration followed by a ketol-acid reduction of (S)-2-acetolactate (S2AL) to yield (R)-2,3-dihydroxy-isovalerate. In the isomerase reaction, S2AL is rearranged via a Mg-dependent methyl migration to produce 3-hydroxy-3-methyl-2-ketobutyrate (HMKB). In the reductase reaction, this 2-ketoacid undergoes a metal-dependent reduction by NADPH to yield (R)-2,3-dihydroxy-isovalerate. The protein is Ketol-acid reductoisomerase (NADP(+)) of Stutzerimonas stutzeri (strain A1501) (Pseudomonas stutzeri).